The primary structure comprises 425 residues: Enolase (425 aa).

Glutamine 163 contributes to the (2R)-2-phosphoglycerate binding site. Residue glutamate 205 is the Proton donor of the active site. Residues aspartate 242, glutamate 285, and aspartate 312 each contribute to the Mg(2+) site. The (2R)-2-phosphoglycerate site is built by lysine 337, arginine 366, serine 367, and lysine 388. The active-site Proton acceptor is lysine 337.

It belongs to the enolase family. Mg(2+) serves as cofactor.

The protein resides in the cytoplasm. The protein localises to the secreted. It is found in the cell surface. It catalyses the reaction (2R)-2-phosphoglycerate = phosphoenolpyruvate + H2O. Its pathway is carbohydrate degradation; glycolysis; pyruvate from D-glyceraldehyde 3-phosphate: step 4/5. Catalyzes the reversible conversion of 2-phosphoglycerate (2-PG) into phosphoenolpyruvate (PEP). It is essential for the degradation of carbohydrates via glycolysis. This Syntrophomonas wolfei subsp. wolfei (strain DSM 2245B / Goettingen) protein is Enolase.